A 686-amino-acid polypeptide reads, in one-letter code: Methionine--tRNA ligase (686 aa).

The short motif at 15–25 (PYANGPIHLGH) is the 'HIGH' region element. Residues Cys-146, Cys-149, Cys-159, and Cys-162 each coordinate Zn(2+). A 'KMSKS' region motif is present at residues 331–335 (KMSKS). Lys-334 is an ATP binding site. Positions 584–686 (DFAKIDLRVA…AGVKAGSRVM (103 aa)) constitute a tRNA-binding domain.

This sequence belongs to the class-I aminoacyl-tRNA synthetase family. MetG type 1 subfamily. Homodimer. Zn(2+) is required as a cofactor.

It localises to the cytoplasm. It carries out the reaction tRNA(Met) + L-methionine + ATP = L-methionyl-tRNA(Met) + AMP + diphosphate. In terms of biological role, is required not only for elongation of protein synthesis but also for the initiation of all mRNA translation through initiator tRNA(fMet) aminoacylation. This is Methionine--tRNA ligase from Mannheimia succiniciproducens (strain KCTC 0769BP / MBEL55E).